Here is a 678-residue protein sequence, read N- to C-terminus: Glutamate--cysteine ligase (678 aa).

Belongs to the glutamate--cysteine ligase type 3 family.

It carries out the reaction L-cysteine + L-glutamate + ATP = gamma-L-glutamyl-L-cysteine + ADP + phosphate + H(+). It functions in the pathway sulfur metabolism; glutathione biosynthesis; glutathione from L-cysteine and L-glutamate: step 1/2. Its activity is regulated as follows. Feedback inhibition by glutathione. Functionally, catalyzes the ATP-dependent condensation of cysteine and glutamate to form the dipeptide gamma-glutamylcysteine (gamma-GC), the first and rate-limiting step in the production of glutathione (GSH). This Saccharomyces cerevisiae (strain ATCC 204508 / S288c) (Baker's yeast) protein is Glutamate--cysteine ligase (GSH1).